The sequence spans 357 residues: 4-hydroxymandelate oxidase (357 aa).

Residues 1–357 (MTYVSLADLE…RRLNTKLGVV (357 aa)) form the FMN hydroxy acid dehydrogenase domain. An FMN-binding site is contributed by glutamine 126. A 2-oxocarboxylate is bound at residue tyrosine 128. Threonine 154 serves as a coordination point for FMN. Residue arginine 163 coordinates a 2-oxocarboxylate. An FMN-binding site is contributed by lysine 228. The active-site Proton acceptor is histidine 252. Residue arginine 255 participates in a 2-oxocarboxylate binding. FMN-binding positions include 283–287 (DGGIR) and 306–307 (GR).

The protein belongs to the FMN-dependent alpha-hydroxy acid dehydrogenase family. Requires FMN as cofactor.

The enzyme catalyses (S)-4-hydroxymandelate + O2 = 4-hydroxyphenylglyoxylate + H2O2. It functions in the pathway antibiotic biosynthesis; vancomycin biosynthesis. Catalyzes the oxidation of p-hydroxymandelate to p-hydroxybenzoylformate in the biosynthesis of L-(4-hydroxyphenyl)glycine and L-(3,5-dihydroxyphenyl)glycine, 2 non-proteinogenic amino acids occurring in the vancomycin group of antibiotics. The sequence is that of 4-hydroxymandelate oxidase (hmo) from Amycolatopsis orientalis (Nocardia orientalis).